The chain runs to 725 residues: NAD(+) hydrolase SARM1 (725 aa).

A mitochondrion-targeting transit peptide spans 1-27; sequence MVLTILFSAYKLCRFFAMSSPRPGAER. Residues 60 to 100 form an ARM 1 repeat; sequence EVQGALERALPELQQALSALKQAGGGRAVGAGLAEVFQLVE. Residues W103, R110, 149-158, and 191-194 each bind NAD(+); these read EQILVAENRR and HMFK. 7 ARM repeats span residues 114–153, 155–194, 197–236, 238–281, 282–315, 316–355, and 360–403; these read QGLC…QILV, ENRR…HMFK, EETC…NCAM, GGQA…LATN, KEVE…CLVD, ASDT…AEAV, and KNRN…EEVP. SAM domains lie at 413 to 477 and 483 to 549; these read WKEA…LKTF and CDRS…MLHS. Phosphoserine is present on residues S549 and S559. The 144-residue stretch at 561–704 folds into the TIR domain; it reads DVPDVFISYR…KIIRFLQGRS (144 aa). NAD(+)-binding positions include 570-571 and E600; that span reads RR. Residue E643 is part of the active site. Residues 705 to 725 are disordered; the sequence is SRDSSAGSDTSLEGAAPMGPT.

This sequence belongs to the SARM1 family. As to quaternary structure, homooctamer; forms an octameric ring via SAM domains. Interacts with TICAM1/TRIF and thereby interferes with TICAM1/TRIF function. Interacts with MAPK10/JNK3 and SDC2 (via cytoplasmic domain). Phosphorylation at Ser-549 by JNK kinases (MAPK8, MAPK9 and /or MAPK10) enhance the NAD(+) hydrolase (NADase) activity. Phosphorylation at Ser-549 and subsequent activation takes place in response to oxidative stress conditions and inhibits mitochondrial respiration. As to expression, highest expression seen in the spleen and the brain, followed by lung, kidney, liver and other tissues.

Its subcellular location is the cytoplasm. The protein resides in the cell projection. The protein localises to the axon. It is found in the dendrite. It localises to the synapse. Its subcellular location is the mitochondrion. It carries out the reaction NAD(+) + H2O = ADP-D-ribose + nicotinamide + H(+). It catalyses the reaction NAD(+) = cyclic ADP-beta-D-ribose + nicotinamide + H(+). The catalysed reaction is NADP(+) + H2O = ADP-D-ribose 2'-phosphate + nicotinamide + H(+). Its activity is regulated as follows. Autoinhibited: in the inactive state, the enzymatic TIR domain is held apart by the autoinhibiting ARM repeats. NAD(+)-binding to ARM repeats maintains an inactive state by promoting interaction between ARM repeats and the TIR domain, thereby facilitating inhibition of the enzymatic TIR domain. Following activation, possibly by nicotinamide mononucleotide (NMN), auto-inhibitory interactions are released, allowing self-association of the TIR domains and subsequent activation of the NAD(+) hydrolase (NADase) activity. Self-association of TIR domains is facilitated by the octamer of SAM domains. NAD(+) hydrolase, which plays a key role in axonal degeneration following injury by regulating NAD(+) metabolism. Acts as a negative regulator of MYD88- and TRIF-dependent toll-like receptor signaling pathway by promoting Wallerian degeneration, an injury-induced form of programmed subcellular death which involves degeneration of an axon distal to the injury site. Wallerian degeneration is triggered by NAD(+) depletion: in response to injury, SARM1 is activated and catalyzes cleavage of NAD(+) into ADP-D-ribose (ADPR), cyclic ADPR (cADPR) and nicotinamide; NAD(+) cleavage promoting cytoskeletal degradation and axon destruction. Also able to hydrolyze NADP(+), but not other NAD(+)-related molecules. Can activate neuronal cell death in response to stress. Regulates dendritic arborization through the MAPK4-JNK pathway. Involved in innate immune response: inhibits both TICAM1/TRIF- and MYD88-dependent activation of JUN/AP-1, TRIF-dependent activation of NF-kappa-B and IRF3, and the phosphorylation of MAPK14/p38. The chain is NAD(+) hydrolase SARM1 from Sus scrofa (Pig).